The primary structure comprises 427 residues: Glutamate-1-semialdehyde 2,1-aminomutase (427 aa).

Residue Lys265 is modified to N6-(pyridoxal phosphate)lysine.

This sequence belongs to the class-III pyridoxal-phosphate-dependent aminotransferase family. HemL subfamily. As to quaternary structure, homodimer. Pyridoxal 5'-phosphate is required as a cofactor.

Its subcellular location is the cytoplasm. It carries out the reaction (S)-4-amino-5-oxopentanoate = 5-aminolevulinate. Its pathway is porphyrin-containing compound metabolism; protoporphyrin-IX biosynthesis; 5-aminolevulinate from L-glutamyl-tRNA(Glu): step 2/2. The chain is Glutamate-1-semialdehyde 2,1-aminomutase from Teredinibacter turnerae (strain ATCC 39867 / T7901).